Consider the following 305-residue polypeptide: UDP-3-O-acyl-N-acetylglucosamine deacetylase (305 aa).

Residues H78, H237, and D241 each contribute to the Zn(2+) site. The active-site Proton donor is H264.

The protein belongs to the LpxC family. The cofactor is Zn(2+).

The catalysed reaction is a UDP-3-O-[(3R)-3-hydroxyacyl]-N-acetyl-alpha-D-glucosamine + H2O = a UDP-3-O-[(3R)-3-hydroxyacyl]-alpha-D-glucosamine + acetate. The protein operates within glycolipid biosynthesis; lipid IV(A) biosynthesis; lipid IV(A) from (3R)-3-hydroxytetradecanoyl-[acyl-carrier-protein] and UDP-N-acetyl-alpha-D-glucosamine: step 2/6. Its function is as follows. Catalyzes the hydrolysis of UDP-3-O-myristoyl-N-acetylglucosamine to form UDP-3-O-myristoylglucosamine and acetate, the committed step in lipid A biosynthesis. The chain is UDP-3-O-acyl-N-acetylglucosamine deacetylase from Burkholderia mallei (strain NCTC 10247).